Consider the following 241-residue polypeptide: Octanoyltransferase (241 aa).

The BPL/LPL catalytic domain occupies Ala43–Pro228. Residues Arg83–His90, Ala159–Gly161, and Gly172–Ser174 each bind substrate. The Acyl-thioester intermediate role is filled by Cys190.

Belongs to the LipB family.

Its subcellular location is the cytoplasm. It carries out the reaction octanoyl-[ACP] + L-lysyl-[protein] = N(6)-octanoyl-L-lysyl-[protein] + holo-[ACP] + H(+). Its pathway is protein modification; protein lipoylation via endogenous pathway; protein N(6)-(lipoyl)lysine from octanoyl-[acyl-carrier-protein]: step 1/2. Catalyzes the transfer of endogenously produced octanoic acid from octanoyl-acyl-carrier-protein onto the lipoyl domains of lipoate-dependent enzymes. Lipoyl-ACP can also act as a substrate although octanoyl-ACP is likely to be the physiological substrate. In Paraburkholderia phytofirmans (strain DSM 17436 / LMG 22146 / PsJN) (Burkholderia phytofirmans), this protein is Octanoyltransferase.